The following is a 616-amino-acid chain: Dihydroxy-acid dehydratase (616 aa).

Asp-81 contributes to the Mg(2+) binding site. Residue Cys-122 coordinates [2Fe-2S] cluster. The Mg(2+) site is built by Asp-123 and Lys-124. Lys-124 is modified (N6-carboxylysine). Residue Cys-197 coordinates [2Fe-2S] cluster. Glu-493 is a Mg(2+) binding site. The Proton acceptor role is filled by Ser-519.

Belongs to the IlvD/Edd family. Homodimer. The cofactor is [2Fe-2S] cluster. Mg(2+) serves as cofactor.

The catalysed reaction is (2R)-2,3-dihydroxy-3-methylbutanoate = 3-methyl-2-oxobutanoate + H2O. It catalyses the reaction (2R,3R)-2,3-dihydroxy-3-methylpentanoate = (S)-3-methyl-2-oxopentanoate + H2O. It participates in amino-acid biosynthesis; L-isoleucine biosynthesis; L-isoleucine from 2-oxobutanoate: step 3/4. The protein operates within amino-acid biosynthesis; L-valine biosynthesis; L-valine from pyruvate: step 3/4. Functionally, functions in the biosynthesis of branched-chain amino acids. Catalyzes the dehydration of (2R,3R)-2,3-dihydroxy-3-methylpentanoate (2,3-dihydroxy-3-methylvalerate) into 2-oxo-3-methylpentanoate (2-oxo-3-methylvalerate) and of (2R)-2,3-dihydroxy-3-methylbutanoate (2,3-dihydroxyisovalerate) into 2-oxo-3-methylbutanoate (2-oxoisovalerate), the penultimate precursor to L-isoleucine and L-valine, respectively. This Corynebacterium kroppenstedtii (strain DSM 44385 / JCM 11950 / CIP 105744 / CCUG 35717) protein is Dihydroxy-acid dehydratase.